A 418-amino-acid chain; its full sequence is (+)-T-muurolol synthase ((2E,6E)-farnesyl diphosphate cyclizing) (418 aa).

Residues Asp-83 and Asp-88 each contribute to the Mg(2+) site. Positions 83 to 88 match the DDXXXD motif motif; it reads DDEYCD. Arg-179 contacts substrate. Mg(2+) is bound by residues Asn-225 and Ser-229. Lys-232 serves as a coordination point for substrate. Glu-233 serves as a coordination point for Mg(2+). Substrate is bound at residue 312–313; the sequence is RY. Residues 354-418 are disordered; it reads LPEPGSDGAD…QQSTWRREHR (65 aa). Residues 402–412 show a composition bias toward polar residues; sequence ASRSSGLQQST.

The protein belongs to the terpene synthase family. Mg(2+) is required as a cofactor.

It carries out the reaction (2E,6E)-farnesyl diphosphate + H2O = (+)-T-muurolol + diphosphate. It functions in the pathway secondary metabolite biosynthesis; terpenoid biosynthesis. Functionally, catalyzes the conversion of (2E,6E)-farnesyl diphosphate (FPP) into (+)-T-muurolol via a 1,10-cyclization, which requires isomerization of FPP to nerolidyl diphosphate (NPP) and then abstraction of the pyrophosphate from intermediate NPP leading to a (E,Z)-germacradienyl (helminthogermacradienyl) cation. The sequence is that of (+)-T-muurolol synthase ((2E,6E)-farnesyl diphosphate cyclizing) from Streptomyces clavuligerus.